A 102-amino-acid polypeptide reads, in one-letter code: RNA-binding protein Hfq (102 aa).

A Sm domain is found at 9-68 (DPFVNALRRERVPVSIYLVNGIKLQGQIESFDQFVILLKNTVSQMVYKHAISTVVPSRPV). The tract at residues 63–102 (VPSRPVSHHSNNAGGGASNNYHHGSNAQGSTAQQDSEETE) is disordered. Positions 70 to 88 (HHSNNAGGGASNNYHHGSN) are enriched in low complexity.

Belongs to the Hfq family. As to quaternary structure, homohexamer.

Its function is as follows. RNA chaperone that binds small regulatory RNA (sRNAs) and mRNAs to facilitate mRNA translational regulation in response to envelope stress, environmental stress and changes in metabolite concentrations. Also binds with high specificity to tRNAs. The protein is RNA-binding protein Hfq of Salmonella heidelberg (strain SL476).